The primary structure comprises 376 residues: MDKHQKFDQSLFQRVDINVLKRSDQLIGKPTTNFVEIMKRLFQNKWAILFFLLIVLIILLAIIVPLASPYSAVTPVSNNALAQNLPPRYLWNGAGDIQVEKITARSIAEVAQSSGVLVGKLPEASSNPLATNVKYNIAPYQLAELKNYYPLLGTNGLGVDIWTLLWASMAKSLWIAIVVALVSMVFGTIYGAIAGSFVGRAADNIMSRIIEIIDLVPSILWIIVLGATFRFGGVKQFDDSVVIFTLIFVFWTWPAATTRIYILKNKDTEYIQAARTLGAKQIRIIFVHMLPVVTGRLAVVFVSLIPAVIGYEASLVFLGLKPATEVGLGALLNQVTSSGNIALITSSIVSFAILTVSTRVFANALNDAIDPRVIRR.

The next 7 helical transmembrane spans lie at 46 to 66, 149 to 169, 173 to 193, 209 to 229, 242 to 262, 297 to 317, and 341 to 361; these read WAIL…IVPL, YPLL…WASM, LWIA…YGAI, IIEI…GATF, VIFT…RIYI, LAVV…SLVF, and IALI…TRVF. In terms of domain architecture, ABC transmembrane type-1 spans 169–362; the sequence is MAKSLWIAIV…ILTVSTRVFA (194 aa).

It belongs to the binding-protein-dependent transport system permease family. OppBC subfamily. In terms of assembly, the complex is composed of two ATP-binding proteins (OppD and OppF), two transmembrane proteins (OppB and OppC) and a solute-binding protein (OppA).

The protein localises to the cell membrane. In terms of biological role, part of the ABC transporter complex OppABCDF involved in the uptake of oligopeptides. Probably responsible for the translocation of the substrate across the membrane. The sequence is that of Oligopeptide transport system permease protein OppC (oppC) from Mycoplasma pneumoniae (strain ATCC 29342 / M129 / Subtype 1) (Mycoplasmoides pneumoniae).